The sequence spans 84 residues: U4-theraphotoxin-Hhn1aa (84 aa).

The N-terminal stretch at 1–22 (MKVTLIAILTCAAVLVLHTTAA) is a signal peptide. A propeptide spanning residues 23-47 (EELEESQLMEVGMPDTELAAVDEER) is cleaved from the precursor. Disulfide bonds link Cys51–Cys65 and Cys55–Cys76.

The protein belongs to the neurotoxin 12 (Hwtx-2) family. 02 (Hwtx-2) subfamily. As to expression, expressed by the venom gland.

It is found in the secreted. Postsynaptic neurotoxin. The sequence is that of U4-theraphotoxin-Hhn1aa from Cyriopagopus hainanus (Chinese bird spider).